Consider the following 253-residue polypeptide: MAGHSKFKNIQHRKGAQDKKRAKVFTKLIREIVTAAKTGSSNNPENNPRLRNALTAARSQNLPKERIDKAINSANDSSNNENYTEIRYEGYAPNGIAIIVEVLTDNKNRTAAEVRSSFTKYGGSLGETGSVNYLFNHCGVIQYPINIASNEDVLEAVIEAGGHDIISDDTTHTIYTDIENFSKVLAFLTGKYGIPEDSYIGWIPLNTIIIDDKEKAEKLLKLVEVLEESDDVQRVFGNYELSDDVYEIIQGEP.

The interval 1-21 is disordered; the sequence is MAGHSKFKNIQHRKGAQDKKR.

The protein belongs to the TACO1 family.

The protein localises to the cytoplasm. The protein is Probable transcriptional regulatory protein RAF_ORF0717 of Rickettsia africae (strain ESF-5).